Reading from the N-terminus, the 496-residue chain is MATIKFPIVFSVVCLFLLCNGSLAQLLSQSTSQWQSSRRGSPRECRFDRLQAFEPIRTVRSQAGTTEFFDVSNELFQCTGVFVVRRVIEPRGLLLPHYSNGATLVYVIQGRGITGPTFPGCPETYQQQFQQSEQDQQLEGQSQSHKFRDEHQKIHRFQQGDVVALPAGVAHWCYNDGDAPIVAIYVTDIYNSANQLDPRHRDFFLAGNNKIGQQLYRYEARDNSKNVFGGFSVELLSEALGISSGVARQLQCQNDQRGEIVRVEHGLSLLQPYASLQEQQQEQVQSRDYGQTQYQQKQLQGSCSNGLDETFCTMRVRQNIDNPNLADTYNPRAGRITYLNGQKFPILNLVQMSAVKVNLYQNALLSPFWNINAHSVVYITQGRARVQVVNNNGKTVFDGELRRGQLLIIPQHHVVIKKAQREGCSYIALKTNPDSMVSHMAGKNSIFRALPDDVVANAYRISREEARRLKHNRGDELGVFTPSHAYKSYQDISVSA.

A signal peptide spans 1–24 (MATIKFPIVFSVVCLFLLCNGSLA). Disulfide bonds link Cys45–Cys78 and Cys121–Cys312. Cupin type-1 domains follow at residues 50-248 (LQAF…GVAR) and 318-467 (QNID…EEAR).

Belongs to the 11S seed storage protein (globulins) family. In terms of assembly, hexamer; each subunit is composed of an acidic and a basic chain derived from a single precursor and linked by a disulfide bond.

In terms of biological role, seed storage protein. This chain is Glutelin type-A 3 (GLUA3), found in Oryza sativa subsp. japonica (Rice).